The following is an 80-amino-acid chain: Protein FAM229B (80 aa).

The tract at residues Met1–Leu44 is disordered.

It belongs to the FAM229 family.

This Macaca fascicularis (Crab-eating macaque) protein is Protein FAM229B (FAM229B).